A 408-amino-acid chain; its full sequence is Energy-coupling factor transporter ATP-binding protein EcfA1 (408 aa).

The 235-residue stretch at 140-374 (IEIKNLSFKY…KEFLRNIQLD (235 aa)) folds into the ABC transporter domain. ATP is bound at residue 174–181 (GHNGSGKS).

The protein belongs to the ABC transporter superfamily. Energy-coupling factor EcfA family. As to quaternary structure, forms a stable energy-coupling factor (ECF) transporter complex composed of 2 membrane-embedded substrate-binding proteins (S component), 2 ATP-binding proteins (A component) and 2 transmembrane proteins (T component).

It localises to the cell membrane. Functionally, ATP-binding (A) component of a common energy-coupling factor (ECF) ABC-transporter complex. Unlike classic ABC transporters this ECF transporter provides the energy necessary to transport a number of different substrates. In Mycoplasma capricolum subsp. capricolum (strain California kid / ATCC 27343 / NCTC 10154), this protein is Energy-coupling factor transporter ATP-binding protein EcfA1.